The primary structure comprises 405 residues: Eukaryotic translation initiation factor 5 (405 aa).

27–34 (GRGNGIKT) serves as a coordination point for GTP. The segment at 143 to 202 (NPPDSVSGSKKKKKAATASANVRGGGLSISDIAQGKSQNAPSDGTGSSTPQHHDEDEDEL) is disordered. A phosphoserine mark is found at Ser-170 and Ser-172. Over residues 177 to 192 (GKSQNAPSDGTGSSTP) the composition is skewed to polar residues. Thr-191 is subject to Phosphothreonine. Ser-228 is subject to Phosphoserine. Positions 241–402 (VNSELTQLDE…ETAESDDDEE (162 aa)) constitute a W2 domain. Thr-317 is subject to Phosphothreonine. Position 397 is a phosphoserine (Ser-397).

This sequence belongs to the eIF-2-beta/eIF-5 family. In terms of assembly, monomer. The factors eIF-1, eIF-2, eIF-3, TIF5/eIF-5 and methionyl-tRNAi form a multifactor complex (MFC) that may bind to the 40S ribosome. TIF32, NIP1 and TIF5/eIF-5 comprise a minimal 40S-ribosome-binding unit. Interacts with NIP1. Interacts with SUI3.

In terms of biological role, catalyzes the hydrolysis of GTP bound to the 40S ribosomal initiation complex (40S.mRNA.Met-tRNA[F].eIF-2.GTP) with the subsequent joining of a 60S ribosomal subunit resulting in the release of eIF-2 and the guanine nucleotide. The subsequent joining of a 60S ribosomal subunit results in the formation of a functional 80S initiation complex (80S.mRNA.Met-tRNA[F]). eIF-5 is essential for cell viability. This is Eukaryotic translation initiation factor 5 (TIF5) from Saccharomyces cerevisiae (strain ATCC 204508 / S288c) (Baker's yeast).